A 2090-amino-acid chain; its full sequence is Host cell factor 1 (2090 aa).

A2 is modified (N-acetylalanine). S6 carries the post-translational modification Phosphoserine. Kelch repeat units follow at residues 44–89 (LIVV…GFVC), 93–140 (RLLV…RLGH), 148–194 (KCYL…ITYG), 217–265 (KLVI…TIGN), and 266–313 (KMYV…LMDT). Glycyl lysine isopeptide (Lys-Gly) (interchain with G-Cter in ubiquitin) cross-links involve residues K105, K163, and K244. K282 is covalently cross-linked (Glycyl lysine isopeptide (Lys-Gly) (interchain with G-Cter in SUMO2)). Residue K288 is modified to N6-acetyllysine. A Glycyl lysine isopeptide (Lys-Gly) (interchain with G-Cter in ubiquitin) cross-link involves residue K363. Positions 366–469 (PPARVQLVRA…TIQVLPTVPG (104 aa)) constitute a Fibronectin type-III 1 domain. The tract at residues 407–434 (ATATSPTPNPVPSVPANPPKSPAPAAAA) is disordered. S411 is subject to Phosphoserine. Over residues 413–428 (TPNPVPSVPANPPKSP) the composition is skewed to pro residues. The tract at residues 500-550 (LVTMRPAGQAGKAPVTVTSLPASVRMVVPTQSAQGTVIGSNPQMSGMAALA) is required for interaction with OGT. R504 and R524 each carry omega-N-methylarginine. 3 positions are modified to phosphoserine: S598, S666, and S669. Residues 610 to 722 (LKTAAAQVGT…KGPLPAGTIL (113 aa)) form an interaction with SIN3A region. Residues 750–902 (ILGISSVSPS…SLAGAGAHST (153 aa)) form an interaction with ZBTB17 region. Residue K813 is modified to N6-acetyllysine. Residues 813 to 912 (KIITAVPKIA…SASLATPITT (100 aa)) are interaction with GABP2. HCF repeat repeat units lie at residues 1010 to 1035 (TLVC…TVVA), 1072 to 1097 (VRVC…ATSN), and 1101 to 1126 (QHGC…AMSS). A disordered region spans residues 1098-1140 (MAGQHGCSNPPCETHETGTTSTATTAMSSMGTGQQRDTRHTSS). Over residues 1114-1130 (TGTTSTATTAMSSMGTG) the composition is skewed to low complexity. The stretch at 1157 to 1182 (TQGTVKPQCQTQQANMTNTTMTVQAT) is one HCF repeat 4; degenerate repeat. S1204 carries the post-translational modification Phosphoserine. R1216 carries the asymmetric dimethylarginine modification. At S1223 the chain carries Phosphoserine. HCF repeat repeat units follow at residues 1295–1320 (TQVC…SNAG) and 1323–1348 (QRVC…ATSN). Disordered stretches follow at residues 1302 to 1374 (PCET…TTST) and 1444 to 1486 (TVTS…TTVS). Residues 1308–1321 (TGTTNTATTSNAGS) show a composition bias toward low complexity. An HCF repeat 7; degenerate repeat occupies 1358–1383 (QQPAGGRPCETHQTTSTGTTMSVSVG). Residues 1423 to 1448 (QRVCSNPPCETHETGTTHTATTVTSN) form an HCF repeat 8 repeat. The span at 1465–1475 (VVSTQGDSANI) shows a compositional bias: polar residues. Over residues 1476-1486 (TSSSGITTTVS) the composition is skewed to low complexity. T1500 is modified (phosphothreonine). Residues S1506, S1559, and S1826 each carry the phosphoserine modification. 2 Fibronectin type-III domains span residues 1853 to 1943 (PPPP…TCLP) and 1945 to 2061 (FPGA…TSKD). Residues K1862 and K1863 each participate in a glycyl lysine isopeptide (Lys-Gly) (interchain with G-Cter in ubiquitin) cross-link. Residue S1893 is modified to Phosphoserine. The interval 2049–2090 (ATQVRWLQETSKDSSGTKPASKRPMSSPEMKSAPKKSKADGQ) is disordered. Residue K2060 is modified to N6-acetyllysine. A Glycyl lysine isopeptide (Lys-Gly) (interchain with G-Cter in SUMO2) cross-link involves residue K2079.

As to quaternary structure, composed predominantly of six polypeptides ranging from 110 to 150 kDa and a minor 300 kDa polypeptide. The majority of N- and C-terminal cleavage products remain tightly, albeit non-covalently, associated. Interacts with POU2F1, CREB3, ZBTB17, EGR2, E2F4, CREBZF, SP1, GABP2, Sin3 HDAC complex (SIN3A, HDAC1, HDAC2, SUDS3), SAP30, SIN3B and FHL2. Component of a MLL1 complex, composed of at least the core components KMT2A/MLL1, ASH2L, HCFC1, WDR5 and RBBP5, as well as the facultative components BACC1, CHD8, DPY30, E2F6, HCFC2, HSP70, INO80C, KANSL1, LAS1L, MAX, MCRS1, MEN1, MGA, KAT8, PELP1, PHF20, PRP31, RING2, RUVBL1, RUVBL2, SENP3, TAF1, TAF4, TAF6, TAF7, TAF9 and TEX10. Component of a THAP1/THAP3-HCFC1-OGT complex that is required for the regulation of the transcriptional activity of RRM1. Interacts directly with THAP3 (via its HBM). Interacts (via the Kelch-repeat domain) with THAP1 (via the HBM); the interaction recruits HCHC1 to the RRM1. Interacts directly with OGT; the interaction, which requires the HCFC1 cleavage site domain, glycosylates and promotes the proteolytic processing of HCFC1 and retains OGT in the nucleus. Component of the SET1 complex, at least composed of the catalytic subunit (SETD1A or SETD1B), WDR5, WDR82, RBBP5, ASH2L, CXXC1, HCFC1 and DPY30. Component of the NSL complex at least composed of MOF/KAT8, KANSL1, KANSL2, KANSL3, MCRS1, PHF20, OGT1/OGT, WDR5 and HCFC1. Component of a complex at least composed of ZNF335, HCFC1, CCAR2, EMSY, MKI67, RBBP5, ASH2L and WDR5; the complex is formed as a result of interactions between components of a nuclear receptor-mediated transcription complex and a histone methylation complex. Within the complex interacts with ZNF335. Interacts with TET2 and TET3. Interacts with HCFC1R1. Interacts with THAP11. Interacts (via Kelch domain) with KMT2E (via HBM motif). Interacts with E2F1. Accessory scaffold component of the polycomb repressive deubiquitinase (PR-DUB) complex, at least composed of BAP1, one of ASXL1, ASXL2 or (probably) ASXL3 and one of MBD5 or MBD6; the PR-DUB core associates with a number of accessory proteins, including FOXK1, FOXK2, KDM1B, HCFC1, YY1 and OGT. Interacts with YY1 (via Gly-rich region); the interaction is direct. Interacts with BAP1 (via HBM-like motif). Post-translationally, proteolytically cleaved at one or several PPCE--THET sites within the HCF repeats. Cleavage is promoted by O-glycosylation. Further cleavage of the primary N- and C-terminal chains results in a 'trimming' and accumulation of the smaller chains. Cleavage is promoted by O-glycosylation. In terms of processing, O-glycosylated. GlcNAcylation by OGT promotes proteolytic processing. Ubiquitinated. Lys-1862 and Lys-1863 are ubiquitinated both via 'Lys-48'- and 'Lys-63'-linked polyubiquitin chains. BAP1 mediated deubiquitination of 'Lys-48'-linked polyubiquitin chains; deubiquitination by BAP1 does not seem to stabilize the protein.

It is found in the cytoplasm. The protein resides in the nucleus. Functionally, transcriptional coregulator. Serves as a scaffold protein, bridging interactions between transcription factors, including THAP11 and ZNF143, and transcriptional coregulators. Involved in control of the cell cycle. Also antagonizes transactivation by ZBTB17 and GABP2; represses ZBTB17 activation of the p15(INK4b) promoter and inhibits its ability to recruit p300. Coactivator for EGR2 and GABP2. Tethers the chromatin modifying Set1/Ash2 histone H3 'Lys-4' methyltransferase (H3K4me) and Sin3 histone deacetylase (HDAC) complexes (involved in the activation and repression of transcription respectively) together. As part of the NSL complex it may be involved in acetylation of nucleosomal histone H4 on several lysine residues. Recruits KMT2E to E2F1 responsive promoters promoting transcriptional activation and thereby facilitates G1 to S phase transition. Modulates expression of homeobox protein PDX1, perhaps acting in concert with transcription factor E2F1, thereby regulating pancreatic beta-cell growth and glucose-stimulated insulin secretion. May negatively modulate transcriptional activity of FOXO3. This is Host cell factor 1 from Mesocricetus auratus (Golden hamster).